An 83-amino-acid chain; its full sequence is Mu-theraphotoxin-Hhn2g (83 aa).

Positions 1-21 are cleaved as a signal peptide; the sequence is MKASMYLALAGLVLLFVVGYA. Residues 22 to 48 constitute a propeptide that is removed on maturation; it reads SESEEKEFPRELLSKIFAVDDFKGEER. 2 disulfide bridges follow: Cys-50-Cys-65 and Cys-57-Cys-70. At Leu-81 the chain carries Leucine amide.

The protein belongs to the neurotoxin 10 (Hwtx-1) family. 15 (Hntx-3) subfamily. In terms of assembly, monomer. Expressed by the venom gland.

The protein resides in the secreted. In terms of biological role, lethal neurotoxin. Selectively blocks tetrodotoxin-sensitive voltage-gated sodium channels (Nav). Does not affect tetrodotoxin-resistant voltage-gated sodium channels or calcium channels. This is Mu-theraphotoxin-Hhn2g from Cyriopagopus hainanus (Chinese bird spider).